Consider the following 302-residue polypeptide: Sulfate adenylyltransferase subunit 2 (302 aa).

It belongs to the PAPS reductase family. CysD subfamily. In terms of assembly, heterodimer composed of CysD, the smaller subunit, and CysN.

It catalyses the reaction sulfate + ATP + H(+) = adenosine 5'-phosphosulfate + diphosphate. It functions in the pathway sulfur metabolism; hydrogen sulfide biosynthesis; sulfite from sulfate: step 1/3. Functionally, with CysN forms the ATP sulfurylase (ATPS) that catalyzes the adenylation of sulfate producing adenosine 5'-phosphosulfate (APS) and diphosphate, the first enzymatic step in sulfur assimilation pathway. APS synthesis involves the formation of a high-energy phosphoric-sulfuric acid anhydride bond driven by GTP hydrolysis by CysN coupled to ATP hydrolysis by CysD. This chain is Sulfate adenylyltransferase subunit 2, found in Shewanella halifaxensis (strain HAW-EB4).